The primary structure comprises 602 residues: Myotubularin (602 aa).

The disordered stretch occupies residues 1–32 (MASNSTPKYNSNSLENSLRRSPGDGMNHEQND). A compositionally biased stretch (basic and acidic residues) spans 17 to 31 (SLRRSPGDGMNHEQN). The GRAM domain occupies 28 to 96 (HEQNDEIPCL…GVIARIEKMG (69 aa)). One can recognise a Myotubularin phosphatase domain in the interval 162–537 (GWAVYDAMTE…RHLELWVNYY (376 aa)). Residues N287, N312, and I313 each coordinate a 1,2-diacyl-sn-glycero-3-phospho-(1D-myo-inositol-3,5-bisphosphate). Positions 287, 312, and 313 each coordinate a 1,2-diacyl-sn-glycero-3-phospho-(1D-myo-inositol-3-phosphate). The active-site Phosphocysteine intermediate is the C374. A 1,2-diacyl-sn-glycero-3-phospho-(1D-myo-inositol-3,5-bisphosphate)-binding residues include S375, D376, G377, W378, D379, R380, K416, and R420. Residues S375, D376, G377, W378, D379, and R380 each coordinate a 1,2-diacyl-sn-glycero-3-phospho-(1D-myo-inositol-3-phosphate). R420 is a binding site for a 1,2-diacyl-sn-glycero-3-phospho-(1D-myo-inositol-3-phosphate). Positions 574–602 (QITNSPKMNSSTTSPSSPSQIMPQVHTPF) are disordered. Residues 583–592 (SSTTSPSSPS) are compositionally biased toward low complexity.

Belongs to the protein-tyrosine phosphatase family. Non-receptor class myotubularin subfamily.

The protein resides in the cytoplasm. It is found in the cell membrane. Its subcellular location is the cell projection. It localises to the filopodium. The protein localises to the ruffle. The protein resides in the late endosome. It is found in the myofibril. Its subcellular location is the sarcomere. The catalysed reaction is a 1,2-diacyl-sn-glycero-3-phospho-(1D-myo-inositol-3-phosphate) + H2O = a 1,2-diacyl-sn-glycero-3-phospho-(1D-myo-inositol) + phosphate. The enzyme catalyses a 1,2-diacyl-sn-glycero-3-phospho-(1D-myo-inositol-3,5-bisphosphate) + H2O = a 1,2-diacyl-sn-glycero-3-phospho-(1D-myo-inositol-5-phosphate) + phosphate. It catalyses the reaction 1,2-dioctanoyl-sn-glycero-3-phospho-(1-D-myo-inositol-3-phosphate) + H2O = 1,2-dioctanoyl-sn-glycero-3-phospho-(1D-myo-inositol) + phosphate. It carries out the reaction 1,2-dioctanoyl-sn-glycero-3-phospho-(1D-myo-inositol-3,5-bisphosphate) + H2O = 1,2-dioctanoyl-sn-glycero-3-phospho-(1D-myo-inositol-5-phosphate) + phosphate. The catalysed reaction is 1,2-dihexadecanoyl-sn-glycero-3-phospho-(1D-myo-inositol-3,5-phosphate) + H2O = 1,2-dihexadecanoyl-sn-glycero-3-phospho-(1D-myo-inositol-5-phosphate) + phosphate. Its function is as follows. Lipid phosphatase which dephosphorylates phosphatidylinositol 3-monophosphate (PI3P) and phosphatidylinositol 3,5-bisphosphate (PI(3,5)P2). The protein is Myotubularin (mtm1) of Xenopus tropicalis (Western clawed frog).